Consider the following 142-residue polypeptide: Large ribosomal subunit protein uL13 (142 aa).

It belongs to the universal ribosomal protein uL13 family. As to quaternary structure, part of the 50S ribosomal subunit.

Its function is as follows. This protein is one of the early assembly proteins of the 50S ribosomal subunit, although it is not seen to bind rRNA by itself. It is important during the early stages of 50S assembly. The protein is Large ribosomal subunit protein uL13 of Aliivibrio fischeri (strain ATCC 700601 / ES114) (Vibrio fischeri).